We begin with the raw amino-acid sequence, 571 residues long: Folylpolyglutamate synthase (571 aa).

122 to 125 (GKGS) provides a ligand contact to ATP. The Mg(2+) site is built by S146, E215, and H243. ATP is bound by residues R363 and D385.

Belongs to the folylpolyglutamate synthase family. A monovalent cation serves as cofactor. Expressed in both shoots and roots, but expression in roots is higher compared with shoots. Distinct expression in the quiescent center (QC) region of the root tip. Also expressed in vascular tissues of the cotyledons and hypocotyls, and the first true leaves of 7 days old seedlings.

It localises to the plastid. The protein resides in the chloroplast. It carries out the reaction (6S)-5,6,7,8-tetrahydrofolyl-(gamma-L-Glu)(n) + L-glutamate + ATP = (6S)-5,6,7,8-tetrahydrofolyl-(gamma-L-Glu)(n+1) + ADP + phosphate + H(+). The protein operates within cofactor biosynthesis; tetrahydrofolylpolyglutamate biosynthesis. Its function is as follows. Catalyzes conversion of folates to polyglutamate derivatives allowing concentration of folate compounds in the cell and the intracellular retention of these cofactors, which are important substrates for most of the folate-dependent enzymes that are involved in one-carbon transfer reactions involved in purine, pyrimidine and amino acid synthesis. Essential for organellar and whole-plant folate homeostasis. Required for postembryonic root development. Generates polyglutamylated folate cofactors to support C1 metabolism required for meristem maintenance and cell expansion during postembryonic root development. This Arabidopsis thaliana (Mouse-ear cress) protein is Folylpolyglutamate synthase.